Here is a 484-residue protein sequence, read N- to C-terminus: Glycogen synthase 2 (484 aa).

K15 lines the ADP-alpha-D-glucose pocket.

It belongs to the glycosyltransferase 1 family. Bacterial/plant glycogen synthase subfamily.

The enzyme catalyses [(1-&gt;4)-alpha-D-glucosyl](n) + ADP-alpha-D-glucose = [(1-&gt;4)-alpha-D-glucosyl](n+1) + ADP + H(+). It participates in glycan biosynthesis; glycogen biosynthesis. Its function is as follows. Synthesizes alpha-1,4-glucan chains using ADP-glucose. The polypeptide is Glycogen synthase 2 (Geobacter metallireducens (strain ATCC 53774 / DSM 7210 / GS-15)).